The chain runs to 874 residues: DNA mismatch repair protein MutS (874 aa).

Over residues 1–12 (MSNDRPLTHSEA) the composition is skewed to basic and acidic residues. The disordered stretch occupies residues 1–20 (MSNDRPLTHSEAESSALRLG). ATP is bound at residue 661 to 668 (GPNASGKS). The disordered stretch occupies residues 854–874 (RKSSMGDPPTAPEINQGELPF).

It belongs to the DNA mismatch repair MutS family.

In terms of biological role, this protein is involved in the repair of mismatches in DNA. It is possible that it carries out the mismatch recognition step. This protein has a weak ATPase activity. The polypeptide is DNA mismatch repair protein MutS (Thermosynechococcus vestitus (strain NIES-2133 / IAM M-273 / BP-1)).